Consider the following 860-residue polypeptide: Photoactivated adenylate cyclase subunit beta (860 aa).

Residues 56 to 149 (LRRLMYLSKS…GRMYGDWHMK (94 aa)) form the BLUF 1 domain. Residues 205 to 333 (VVTFIYLVEF…DCINTTSRIA (129 aa)) form the Guanylate cyclase 1 domain. Residues 420–443 (RPPIFDDTPKGKPRPRTPGYGGRQ) are disordered. One can recognise a BLUF 2 domain in the interval 471–563 (LTTLTYISQA…RAYPAEWTLT (93 aa)). Residues 619 to 748 (VMLATDICSF…AVSARVMEVE (130 aa)) form the Guanylate cyclase 2 domain. The disordered stretch occupies residues 819–860 (KPLALEPEEAKQDYRVSPGRMRHGDSGRRSNSAQGKRSTQVR). Residues 847–860 (RSNSAQGKRSTQVR) show a composition bias toward polar residues.

Belongs to the adenylyl cyclase class-4/guanylyl cyclase family. In terms of assembly, heterotetramer of two alpha and two beta subunits. The cofactor is FAD.

The protein localises to the cell projection. Its subcellular location is the cilium. The protein resides in the flagellum. It carries out the reaction ATP = 3',5'-cyclic AMP + diphosphate. Its function is as follows. Acts as a photoreceptor for the step-up photophobic response. The protein is Photoactivated adenylate cyclase subunit beta of Euglena longa (Euglenophycean alga).